We begin with the raw amino-acid sequence, 261 residues long: Cytochrome c oxidase subunit 3 (261 aa).

At 1 to 15 the chain is on the mitochondrial matrix side; sequence MTHQTHAYHMVNPSP. A helical membrane pass occupies residues 16 to 34; it reads WPLTGALSALLLTSGLMMW. The Mitochondrial intermembrane segment spans residues 35–40; the sequence is FHFNNP. Residues 41-66 form a helical membrane-spanning segment; it reads TLLVLGLLTNLISSYQWWRDIVREGT. Topologically, residues 67-72 are mitochondrial matrix; the sequence is YQGHHT. The chain crosses the membrane as a helical span at residues 73–105; it reads KVVQKGLRYGMVLFIISEVFFFLGFFWAFYHSS. The Mitochondrial intermembrane portion of the chain corresponds to 106 to 128; it reads LAPTPELGGCWPPTGISPLNPLE. The helical transmembrane segment at 129-152 threads the bilayer; that stretch reads VPLLNTSILLASGVSITWSHHSLM. Residues 153–155 lie on the Mitochondrial matrix side of the membrane; it reads EGN. The chain crosses the membrane as a helical span at residues 156–183; sequence RKQMIQALMITIALGLYFTALQAMEYYE. Residues 184–190 are Mitochondrial intermembrane-facing; the sequence is SSFTISD. The helical transmembrane segment at 191–223 threads the bilayer; sequence GVYGSTFFVATGFHGLHVIIGTTFLITCLLRQL. The Mitochondrial matrix portion of the chain corresponds to 224–232; sequence LYHFTSNHH. Residues 233–256 traverse the membrane as a helical segment; that stretch reads FGFEAAAWYWHFVDVVWLFLYVSI. Topologically, residues 257 to 261 are mitochondrial intermembrane; the sequence is YWWGS.

Belongs to the cytochrome c oxidase subunit 3 family. As to quaternary structure, component of the cytochrome c oxidase (complex IV, CIV), a multisubunit enzyme composed of 14 subunits. The complex is composed of a catalytic core of 3 subunits MT-CO1, MT-CO2 and MT-CO3, encoded in the mitochondrial DNA, and 11 supernumerary subunits COX4I, COX5A, COX5B, COX6A, COX6B, COX6C, COX7A, COX7B, COX7C, COX8 and NDUFA4, which are encoded in the nuclear genome. The complex exists as a monomer or a dimer and forms supercomplexes (SCs) in the inner mitochondrial membrane with NADH-ubiquinone oxidoreductase (complex I, CI) and ubiquinol-cytochrome c oxidoreductase (cytochrome b-c1 complex, complex III, CIII), resulting in different assemblies (supercomplex SCI(1)III(2)IV(1) and megacomplex MCI(2)III(2)IV(2)).

The protein resides in the mitochondrion inner membrane. The enzyme catalyses 4 Fe(II)-[cytochrome c] + O2 + 8 H(+)(in) = 4 Fe(III)-[cytochrome c] + 2 H2O + 4 H(+)(out). Its function is as follows. Component of the cytochrome c oxidase, the last enzyme in the mitochondrial electron transport chain which drives oxidative phosphorylation. The respiratory chain contains 3 multisubunit complexes succinate dehydrogenase (complex II, CII), ubiquinol-cytochrome c oxidoreductase (cytochrome b-c1 complex, complex III, CIII) and cytochrome c oxidase (complex IV, CIV), that cooperate to transfer electrons derived from NADH and succinate to molecular oxygen, creating an electrochemical gradient over the inner membrane that drives transmembrane transport and the ATP synthase. Cytochrome c oxidase is the component of the respiratory chain that catalyzes the reduction of oxygen to water. Electrons originating from reduced cytochrome c in the intermembrane space (IMS) are transferred via the dinuclear copper A center (CU(A)) of subunit 2 and heme A of subunit 1 to the active site in subunit 1, a binuclear center (BNC) formed by heme A3 and copper B (CU(B)). The BNC reduces molecular oxygen to 2 water molecules using 4 electrons from cytochrome c in the IMS and 4 protons from the mitochondrial matrix. The protein is Cytochrome c oxidase subunit 3 (MT-CO3) of Tachyglossus aculeatus aculeatus (Southeast Australian short-beaked echidna).